Consider the following 71-residue polypeptide: MIKFSVILGMIRCSLTHITTKNTVNALKRMIYPKQKPSFFHEFKVLYKLLKKFCIKGIMIKNIRSCMGYFL.

The first 26 residues, 1–26, serve as a signal peptide directing secretion; the sequence is MIKFSVILGMIRCSLTHITTKNTVNA.

This is an uncharacterized protein from Bacillus subtilis (strain 168).